Here is a 132-residue protein sequence, read N- to C-terminus: Small ribosomal subunit protein uS8 (132 aa).

The protein belongs to the universal ribosomal protein uS8 family. In terms of assembly, part of the 30S ribosomal subunit. Contacts proteins S5 and S12.

One of the primary rRNA binding proteins, it binds directly to 16S rRNA central domain where it helps coordinate assembly of the platform of the 30S subunit. The chain is Small ribosomal subunit protein uS8 from Clostridium beijerinckii (strain ATCC 51743 / NCIMB 8052) (Clostridium acetobutylicum).